The chain runs to 336 residues: Protein FPV127 (336 aa).

A disordered region spans residues Met-1–Ala-22.

The protein belongs to the poxviruses A16/G9/J5 family.

The chain is Protein FPV127 from Vertebrata (FPV).